A 426-amino-acid polypeptide reads, in one-letter code: 3-phosphoshikimate 1-carboxyvinyltransferase (426 aa).

3 residues coordinate 3-phosphoshikimate: K20, S21, and R25. Residue K20 coordinates phosphoenolpyruvate. Phosphoenolpyruvate-binding residues include G92 and R120. 4 residues coordinate 3-phosphoshikimate: S166, Q168, D312, and K339. Residue Q168 participates in phosphoenolpyruvate binding. The active-site Proton acceptor is the D312. R385 provides a ligand contact to phosphoenolpyruvate.

Belongs to the EPSP synthase family. As to quaternary structure, monomer.

The protein localises to the cytoplasm. The enzyme catalyses 3-phosphoshikimate + phosphoenolpyruvate = 5-O-(1-carboxyvinyl)-3-phosphoshikimate + phosphate. It functions in the pathway metabolic intermediate biosynthesis; chorismate biosynthesis; chorismate from D-erythrose 4-phosphate and phosphoenolpyruvate: step 6/7. Its function is as follows. Catalyzes the transfer of the enolpyruvyl moiety of phosphoenolpyruvate (PEP) to the 5-hydroxyl of shikimate-3-phosphate (S3P) to produce enolpyruvyl shikimate-3-phosphate and inorganic phosphate. This is 3-phosphoshikimate 1-carboxyvinyltransferase from Streptococcus suis (strain 98HAH33).